An 83-amino-acid chain; its full sequence is Small ribosomal subunit protein uS17c (83 aa).

The protein belongs to the universal ribosomal protein uS17 family. Part of the 30S ribosomal subunit.

It is found in the plastid. Its subcellular location is the chloroplast. One of the primary rRNA binding proteins, it binds specifically to the 5'-end of 16S ribosomal RNA. This Porphyra purpurea (Red seaweed) protein is Small ribosomal subunit protein uS17c (rps17).